Consider the following 427-residue polypeptide: Trigger factor (427 aa).

The region spanning 163 to 248 (GDTVVIDFVG…VHEVKAKEVP (86 aa)) is the PPIase FKBP-type domain.

This sequence belongs to the FKBP-type PPIase family. Tig subfamily.

It is found in the cytoplasm. The enzyme catalyses [protein]-peptidylproline (omega=180) = [protein]-peptidylproline (omega=0). In terms of biological role, involved in protein export. Acts as a chaperone by maintaining the newly synthesized protein in an open conformation. Functions as a peptidyl-prolyl cis-trans isomerase. In Streptococcus equi subsp. zooepidemicus (strain MGCS10565), this protein is Trigger factor.